Reading from the N-terminus, the 93-residue chain is UPF0367 protein tsr0804 (93 aa).

Belongs to the UPF0367 family.

The sequence is that of UPF0367 protein tsr0804 from Thermosynechococcus vestitus (strain NIES-2133 / IAM M-273 / BP-1).